A 107-amino-acid polypeptide reads, in one-letter code: Iron-binding protein IscA (107 aa).

Fe cation-binding residues include Cys-35, Cys-99, and Cys-101.

This sequence belongs to the HesB/IscA family. Homodimer; may form tetramers and higher multimers. It depends on Fe cation as a cofactor.

Is able to transfer iron-sulfur clusters to apo-ferredoxin. Multiple cycles of [2Fe2S] cluster formation and transfer are observed, suggesting that IscA acts catalytically. Recruits intracellular free iron so as to provide iron for the assembly of transient iron-sulfur cluster in IscU in the presence of IscS, L-cysteine and the thioredoxin reductase system TrxA/TrxB. The polypeptide is Iron-binding protein IscA (Yersinia enterocolitica serotype O:8 / biotype 1B (strain NCTC 13174 / 8081)).